The following is a 238-amino-acid chain: uncharacterized protein (238 aa).

A disordered region spans residues 219–238 (EESINNNVDDTDDIDNDNFI). Positions 227 to 238 (DDTDDIDNDNFI) are enriched in acidic residues.

This is an uncharacterized protein from Buchnera aphidicola subsp. Acyrthosiphon pisum (strain APS) (Acyrthosiphon pisum symbiotic bacterium).